The following is a 202-amino-acid chain: LexA repressor (202 aa).

The segment at residues 32-52 (RAEVCSAFGFKSPNAAETHLR) is a DNA-binding region (H-T-H motif). Residues Ser-121 and Lys-158 each act as for autocatalytic cleavage activity in the active site.

Belongs to the peptidase S24 family. Homodimer.

The enzyme catalyses Hydrolysis of Ala-|-Gly bond in repressor LexA.. Its function is as follows. Represses a number of genes involved in the response to DNA damage (SOS response), including recA and lexA. In the presence of single-stranded DNA, RecA interacts with LexA causing an autocatalytic cleavage which disrupts the DNA-binding part of LexA, leading to derepression of the SOS regulon and eventually DNA repair. The sequence is that of LexA repressor from Azoarcus sp. (strain BH72).